We begin with the raw amino-acid sequence, 685 residues long: Polyphosphate kinase (685 aa).

Residue N45 coordinates ATP. Residues R375 and R405 each coordinate Mg(2+). Residue H435 is the Phosphohistidine intermediate of the active site. The ATP site is built by Y468, R564, and H592.

This sequence belongs to the polyphosphate kinase 1 (PPK1) family. Requires Mg(2+) as cofactor. An intermediate of this reaction is the autophosphorylated ppk in which a phosphate is covalently linked to a histidine residue through a N-P bond.

It carries out the reaction [phosphate](n) + ATP = [phosphate](n+1) + ADP. Catalyzes the reversible transfer of the terminal phosphate of ATP to form a long-chain polyphosphate (polyP). This chain is Polyphosphate kinase, found in Neisseria meningitidis serogroup A / serotype 4A (strain DSM 15465 / Z2491).